The primary structure comprises 312 residues: Glyoxylate/hydroxypyruvate reductase A (312 aa).

Residue R227 is part of the active site. Catalysis depends on H275, which acts as the Proton donor.

It belongs to the D-isomer specific 2-hydroxyacid dehydrogenase family. GhrA subfamily.

It localises to the cytoplasm. The catalysed reaction is glycolate + NADP(+) = glyoxylate + NADPH + H(+). It carries out the reaction (R)-glycerate + NAD(+) = 3-hydroxypyruvate + NADH + H(+). The enzyme catalyses (R)-glycerate + NADP(+) = 3-hydroxypyruvate + NADPH + H(+). Catalyzes the NADPH-dependent reduction of glyoxylate and hydroxypyruvate into glycolate and glycerate, respectively. This chain is Glyoxylate/hydroxypyruvate reductase A, found in Salmonella typhi.